Consider the following 103-residue polypeptide: Large ribosomal subunit protein bL21 (103 aa).

The protein belongs to the bacterial ribosomal protein bL21 family. In terms of assembly, part of the 50S ribosomal subunit. Contacts protein L20.

Its function is as follows. This protein binds to 23S rRNA in the presence of protein L20. This is Large ribosomal subunit protein bL21 from Enterobacter sp. (strain 638).